The sequence spans 151 residues: Probable cyclic pyranopterin monophosphate synthase (151 aa).

Residues 66–68 (MCH) and 102–103 (ME) contribute to the substrate site. Asp117 is a catalytic residue.

It belongs to the MoaC family. Homohexamer; trimer of dimers.

It catalyses the reaction (8S)-3',8-cyclo-7,8-dihydroguanosine 5'-triphosphate = cyclic pyranopterin phosphate + diphosphate. Its pathway is cofactor biosynthesis; molybdopterin biosynthesis. Functionally, catalyzes the conversion of (8S)-3',8-cyclo-7,8-dihydroguanosine 5'-triphosphate to cyclic pyranopterin monophosphate (cPMP). In Sulfurisphaera tokodaii (strain DSM 16993 / JCM 10545 / NBRC 100140 / 7) (Sulfolobus tokodaii), this protein is Probable cyclic pyranopterin monophosphate synthase.